Consider the following 160-residue polypeptide: Ribosomal RNA large subunit methyltransferase H (160 aa).

The S-adenosyl-L-methionine site is built by Leu-76 and Gly-108.

The protein belongs to the RNA methyltransferase RlmH family. In terms of assembly, homodimer.

The protein resides in the cytoplasm. It carries out the reaction pseudouridine(1915) in 23S rRNA + S-adenosyl-L-methionine = N(3)-methylpseudouridine(1915) in 23S rRNA + S-adenosyl-L-homocysteine + H(+). Its function is as follows. Specifically methylates the pseudouridine at position 1915 (m3Psi1915) in 23S rRNA. The chain is Ribosomal RNA large subunit methyltransferase H from Bradyrhizobium sp. (strain BTAi1 / ATCC BAA-1182).